Here is a 351-residue protein sequence, read N- to C-terminus: Putative [LysW]-L-2-aminoadipate/[LysW]-L-glutamate phosphate reductase (351 aa).

Residues S9–V12 and S33–R35 each bind NADP(+). C150 is an active-site residue. N318 serves as a coordination point for NADP(+).

It belongs to the NAGSA dehydrogenase family. Type 1 subfamily. LysY sub-subfamily.

The protein localises to the cytoplasm. It catalyses the reaction [amino-group carrier protein]-C-terminal-N-(1-carboxy-5-oxopentan-1-yl)-L-glutamine + phosphate + NADP(+) = [amino-group carrier protein]-C-terminal-N-(1-carboxy-5-phosphooxy-5-oxopentan-1-yl)-L-glutamine + NADPH + H(+). The catalysed reaction is [amino-group carrier protein]-C-terminal-gamma-(L-glutamyl-5-semialdehyde)-L-glutamate + phosphate + NADP(+) = [amino-group carrier protein]-C-terminal-gamma-(5-phospho-L-glutamyl)-L-glutamate + NADPH + H(+). It participates in amino-acid biosynthesis; L-lysine biosynthesis via AAA pathway; L-lysine from L-alpha-aminoadipate (Thermus route): step 3/5. It functions in the pathway amino-acid biosynthesis; L-arginine biosynthesis. Its function is as follows. Involved in both the arginine and lysine biosynthetic pathways. This is Putative [LysW]-L-2-aminoadipate/[LysW]-L-glutamate phosphate reductase from Pyrobaculum aerophilum (strain ATCC 51768 / DSM 7523 / JCM 9630 / CIP 104966 / NBRC 100827 / IM2).